We begin with the raw amino-acid sequence, 179 residues long: Bifunctional protein PyrR (179 aa).

The PRPP-binding motif lies at 100-112; it reads VILVDDVLFTGRT.

This sequence belongs to the purine/pyrimidine phosphoribosyltransferase family. PyrR subfamily.

The catalysed reaction is UMP + diphosphate = 5-phospho-alpha-D-ribose 1-diphosphate + uracil. Regulates the transcription of the pyrimidine nucleotide (pyr) operon in response to exogenous pyrimidines. In terms of biological role, also displays a weak uracil phosphoribosyltransferase activity which is not physiologically significant. This is Bifunctional protein PyrR from Actinobacillus succinogenes (strain ATCC 55618 / DSM 22257 / CCUG 43843 / 130Z).